Reading from the N-terminus, the 498-residue chain is Oligopeptide transport system permease protein AmiC (498 aa).

6 helical membrane-spanning segments follow: residues 12–32 (SLVS…TLVP), 279–299 (MIVS…ALAV), 316–336 (LSTG…VYIV), 359–379 (SYVL…AIWI), 415–435 (MVPL…GATL), and 461–481 (VVGL…LGDI). In terms of domain architecture, ABC transmembrane type-1 spans 280–479 (IVSSAITGLI…CISIFSRLLG (200 aa)).

The protein belongs to the binding-protein-dependent transport system permease family. OppBC subfamily.

It is found in the cell membrane. In terms of biological role, part of the binding-protein-dependent transport system for oligopeptides; probably responsible for the translocation of the substrate across the membrane. The sequence is that of Oligopeptide transport system permease protein AmiC (amiC) from Streptococcus pneumoniae serotype 4 (strain ATCC BAA-334 / TIGR4).